We begin with the raw amino-acid sequence, 262 residues long: Homeobox-leucine zipper protein HOX24 (262 aa).

Disordered stretches follow at residues 44–68 and 162–189; these read AAGRGGGDGDGGGGGGGGGGERKRR and LNERQDQSGSCDGGGAEGDDDDKRNSVM. Residues 46–62 are compositionally biased toward gly residues; sequence GRGGGDGDGGGGGGGGG. Residues 61 to 122 constitute a DNA-binding region (homeobox); it reads GGGERKRRFT…NKRARWRSKQ (62 aa). Residues 121–165 form a leucine-zipper region; sequence KQIEHDYAALRAQYDALHARVESLRQEKLALAAQVDELRGKLNER.

The protein belongs to the HD-ZIP homeobox family. Class I subfamily. As to expression, expressed in roots and panicles.

The protein resides in the nucleus. Probable transcription factor. The sequence is that of Homeobox-leucine zipper protein HOX24 (HOX24) from Oryza sativa subsp. indica (Rice).